The primary structure comprises 66 residues: Large ribosomal subunit protein bL35 (66 aa).

This sequence belongs to the bacterial ribosomal protein bL35 family.

The polypeptide is Large ribosomal subunit protein bL35 (Wigglesworthia glossinidia brevipalpis).